Here is a 333-residue protein sequence, read N- to C-terminus: DNA-directed RNA polymerase subunit alpha (333 aa).

Positions Met-1–Lys-234 are alpha N-terminal domain (alpha-NTD). The alpha C-terminal domain (alpha-CTD) stretch occupies residues Ile-248 to Ala-333.

Belongs to the RNA polymerase alpha chain family. In terms of assembly, homodimer. The RNAP catalytic core consists of 2 alpha, 1 beta, 1 beta' and 1 omega subunit. When a sigma factor is associated with the core the holoenzyme is formed, which can initiate transcription.

It catalyses the reaction RNA(n) + a ribonucleoside 5'-triphosphate = RNA(n+1) + diphosphate. Functionally, DNA-dependent RNA polymerase catalyzes the transcription of DNA into RNA using the four ribonucleoside triphosphates as substrates. This Pseudomonas fluorescens (strain ATCC BAA-477 / NRRL B-23932 / Pf-5) protein is DNA-directed RNA polymerase subunit alpha.